Consider the following 356-residue polypeptide: Peptide chain release factor 1 (356 aa).

The residue at position 233 (Gln-233) is an N5-methylglutamine.

The protein belongs to the prokaryotic/mitochondrial release factor family. Methylated by PrmC. Methylation increases the termination efficiency of RF1.

Its subcellular location is the cytoplasm. Functionally, peptide chain release factor 1 directs the termination of translation in response to the peptide chain termination codons UAG and UAA. The protein is Peptide chain release factor 1 of Endomicrobium trichonymphae.